The chain runs to 124 residues: SVVKSEDYARPSYVDRRDYPLPDVAHVRHLSASQKALKEKEKASWSSLSMDEKVEKTVVGAAMFFIGFTAILVILEKRYVYGPLPHTFDKEWVAMQTKRMLDLKMNPIDGLASKWDYEKKEWKK.

Lys4 carries the post-translational modification N6-acetyllysine; alternate. Lys4 carries the post-translational modification N6-succinyllysine; alternate. Ser31 and Ser33 each carry phosphoserine. Lys35 carries the post-translational modification N6-acetyllysine; alternate. Lys35 is modified (N6-succinyllysine; alternate). The residue at position 42 (Lys42) is an N6-acetyllysine.

Belongs to the cytochrome c oxidase IV family. In terms of assembly, component of the cytochrome c oxidase (complex IV, CIV), a multisubunit enzyme composed of 14 subunits. The complex is composed of a catalytic core of 3 subunits MT-CO1, MT-CO2 and MT-CO3, encoded in the mitochondrial DNA, and 11 supernumerary subunits COX4I, COX5A, COX5B, COX6A, COX6B, COX6C, COX7A, COX7B, COX7C, COX8 and NDUFA4, which are encoded in the nuclear genome. The complex exists as a monomer or a dimer and forms supercomplexes (SCs) in the inner mitochondrial membrane with NADH-ubiquinone oxidoreductase (complex I, CI) and ubiquinol-cytochrome c oxidoreductase (cytochrome b-c1 complex, complex III, CIII), resulting in different assemblies (supercomplex SCI(1)III(2)IV(1) and megacomplex MCI(2)III(2)IV(2)). Interacts with PHB2; the interaction decreases in absence of SPHK2. Interacts with AFG1L. Interacts with ABCB7; this interaction allows the regulation of cellular iron homeostasis and cellular reactive oxygen species (ROS) levels in cardiomyocytes. Interacts with FLVCR2; this interaction occurs in the absence of heme and is disrupted upon heme binding. Interacts with IRGC.

Its subcellular location is the mitochondrion inner membrane. Its pathway is energy metabolism; oxidative phosphorylation. Component of the cytochrome c oxidase, the last enzyme in the mitochondrial electron transport chain which drives oxidative phosphorylation. The respiratory chain contains 3 multisubunit complexes succinate dehydrogenase (complex II, CII), ubiquinol-cytochrome c oxidoreductase (cytochrome b-c1 complex, complex III, CIII) and cytochrome c oxidase (complex IV, CIV), that cooperate to transfer electrons derived from NADH and succinate to molecular oxygen, creating an electrochemical gradient over the inner membrane that drives transmembrane transport and the ATP synthase. Cytochrome c oxidase is the component of the respiratory chain that catalyzes the reduction of oxygen to water. Electrons originating from reduced cytochrome c in the intermembrane space (IMS) are transferred via the dinuclear copper A center (CU(A)) of subunit 2 and heme A of subunit 1 to the active site in subunit 1, a binuclear center (BNC) formed by heme A3 and copper B (CU(B)). The BNC reduces molecular oxygen to 2 water molecules using 4 electrons from cytochrome c in the IMS and 4 protons from the mitochondrial matrix. The sequence is that of Cytochrome c oxidase subunit 4 isoform 1, mitochondrial (COX4I1) from Saimiri sciureus (Common squirrel monkey).